Consider the following 139-residue polypeptide: Arsenate reductase (139 aa).

Catalysis depends on nucleophile residues Cys10, Cys82, and Cys89. Disulfide bonds link Cys10–Cys82 and Cys82–Cys89.

The protein belongs to the low molecular weight phosphotyrosine protein phosphatase family. Thioredoxin-coupled ArsC subfamily.

The protein resides in the cytoplasm. The catalysed reaction is arsenate + [thioredoxin]-dithiol + H(+) = arsenite + [thioredoxin]-disulfide + H2O. In terms of biological role, catalyzes the reduction of arsenate [As(V)] to arsenite [As(III)]. The protein is Arsenate reductase of Shouchella clausii (strain KSM-K16) (Alkalihalobacillus clausii).